The sequence spans 311 residues: Uridine phosphorylase 1 (311 aa).

Residues Gly-61, Arg-95, and 139–142 (RIGT) each bind phosphate. Residues 143-144 (SG) and 218-220 (QGR) contribute to the uridine site.

The protein belongs to the PNP/UDP phosphorylase family. Homodimer. Post-translationally, the N-terminus is blocked.

It catalyses the reaction uridine + phosphate = alpha-D-ribose 1-phosphate + uracil. The enzyme catalyses 2'-deoxyuridine + phosphate = 2-deoxy-alpha-D-ribose 1-phosphate + uracil. It functions in the pathway pyrimidine metabolism; UMP biosynthesis via salvage pathway; uracil from uridine (phosphorylase route): step 1/1. Its activity is regulated as follows. Strongly inhibited by 2,2'-anhydro-5-ethyluridine, a competitive inhibitor. Catalyzes the reversible phosphorylytic cleavage of uridine to uracil and ribose-1-phosphate which can then be utilized as carbon and energy sources or in the rescue of pyrimidine bases for nucleotide synthesis. Shows broad substrate specificity and can also accept deoxyuridine and other analogous compounds. In Mus musculus (Mouse), this protein is Uridine phosphorylase 1.